A 309-amino-acid chain; its full sequence is MTTFIPIIFSSLVMVMFVTGNFANGFIALVNSIESVKRQKISYADQILTALAVSRIGLLWVLLLNWYSTVLNPAFYSVEVRTTAYNVWAVTGHFSNWLATSLSIFYLLKIANFSNLIFLHLKRRVKSVILVMLLGPLLFLACQLFVINMKEIVQTKEYEGNXTWKIKLRSAVYLSDATVTTLGNLVPFTLTLLCFLLLICSLCKHLKKMQLHGKGSQDPSMKVHIKALQTVTSFLLLCAIYFLSIMISVWSLGSLKNKPVFMFCKAMRFSYPSIHPFILIWGNKKLKQTFLSVLQQVRYWVKGEKPSSP.

Residues 1–2 (MT) lie on the Extracellular side of the membrane. Residues 3–23 (TFIPIIFSSLVMVMFVTGNFA) form a helical membrane-spanning segment. At 24 to 55 (NGFIALVNSIESVKRQKISYADQILTALAVSR) the chain is on the cytoplasmic side. A helical membrane pass occupies residues 56–76 (IGLLWVLLLNWYSTVLNPAFY). Over 77–100 (SVEVRTTAYNVWAVTGHFSNWLAT) the chain is Extracellular. A helical membrane pass occupies residues 101–121 (SLSIFYLLKIANFSNLIFLHL). The Cytoplasmic portion of the chain corresponds to 122-126 (KRRVK). The chain crosses the membrane as a helical span at residues 127-147 (SVILVMLLGPLLFLACQLFVI). At 148–181 (NMKEIVQTKEYEGNXTWKIKLRSAVYLSDATVTT) the chain is on the extracellular side. A glycan (N-linked (GlcNAc...) asparagine) is linked at Asn-161. A helical transmembrane segment spans residues 182–202 (LGNLVPFTLTLLCFLLLICSL). Residues 203–229 (CKHLKKMQLHGKGSQDPSMKVHIKALQ) are Cytoplasmic-facing. The chain crosses the membrane as a helical span at residues 230–250 (TVTSFLLLCAIYFLSIMISVW). The Extracellular segment spans residues 251 to 259 (SLGSLKNKP). The chain crosses the membrane as a helical span at residues 260 to 280 (VFMFCKAMRFSYPSIHPFILI). The Cytoplasmic portion of the chain corresponds to 281 to 309 (WGNKKLKQTFLSVLQQVRYWVKGEKPSSP).

This sequence belongs to the G-protein coupled receptor T2R family.

The protein localises to the membrane. Receptor that may play a role in the perception of bitterness and is gustducin-linked. May play a role in sensing the chemical composition of the gastrointestinal content. The activity of this receptor may stimulate alpha gustducin, mediate PLC-beta-2 activation and lead to the gating of TRPM5. In Gorilla gorilla gorilla (Western lowland gorilla), this protein is Taste receptor type 2 member 31 (TAS2R31).